We begin with the raw amino-acid sequence, 443 residues long: Dynein regulatory complex protein 9 (443 aa).

Disordered regions lie at residues 1–40 (MEED…LPKE) and 415–443 (GFKM…GKKK). Residues 393–422 (ELKSVIKLQAWWRGTMIRREIGGFKMPKDK) form the IQ domain. Residues 415–430 (GFKMPKDKVDSKDSKG) show a composition bias toward basic and acidic residues. Positions 431–443 (KGKGKDKRRGKKK) are enriched in basic residues.

Belongs to the DRC9 family. As to quaternary structure, component of the nexin-dynein regulatory complex (N-DRC). Interacts (via IQ domain) with CALM when calcium levels are low. Does not interact with CALM in the presence of Ca(2+). Interacts with the HSP70 proteins HSPA1L and HSPA8. May form a complex with CAMK4 and HSP70.

Its subcellular location is the cytoplasm. It localises to the cell projection. The protein localises to the cilium. It is found in the flagellum. The protein resides in the cytoskeleton. Its subcellular location is the flagellum axoneme. In terms of biological role, component of the nexin-dynein regulatory complex (N-DRC), a key regulator of ciliary/flagellar motility which maintains the alignment and integrity of the distal axoneme and regulates microtubule sliding in motile axonemes. Binds calmodulin when cellular Ca(2+) levels are low and thereby contributes to the regulation of calcium and calmodulin-dependent protein kinase IV (CAMK4) activity; contributes to the regulation of CAMK4 signaling cascades. Required for normal axoneme assembly in sperm flagella, normal sperm tail formation and for male fertility. This Macaca fascicularis (Crab-eating macaque) protein is Dynein regulatory complex protein 9 (IQCG).